The sequence spans 410 residues: CinA-like protein (410 aa).

Belongs to the CinA family.

In Anaeromyxobacter sp. (strain Fw109-5), this protein is CinA-like protein.